The chain runs to 54 residues: Ovomucoid (54 aa).

The 51-residue stretch at 4–54 (VDCSDYPKPACTVEYMPLCGSDNKTYGNKCNFCNAVVDSNGTLTLSHFGKC) folds into the Kazal-like domain. Cystine bridges form between C6/C36, C14/C33, and C22/C54. N-linked (GlcNAc...) asparagine glycosylation occurs at N43.

The protein resides in the secreted. This chain is Ovomucoid, found in Anser canagicus (Emperor goose).